Here is a 380-residue protein sequence, read N- to C-terminus: Magnesium-protoporphyrin IX monomethyl ester [oxidative] cyclase 1 (380 aa).

The protein belongs to the AcsF family. Requires Fe cation as cofactor.

The catalysed reaction is Mg-protoporphyrin IX 13-monomethyl ester + 3 NADPH + 3 O2 + 2 H(+) = 3,8-divinyl protochlorophyllide a + 3 NADP(+) + 5 H2O. It participates in porphyrin-containing compound metabolism; chlorophyll biosynthesis (light-independent). In terms of biological role, catalyzes the formation of the isocyclic ring in chlorophyll biosynthesis. Mediates the cyclase reaction, which results in the formation of divinylprotochlorophyllide (Pchlide) characteristic of all chlorophylls from magnesium-protoporphyrin IX 13-monomethyl ester (MgPMME). The chain is Magnesium-protoporphyrin IX monomethyl ester [oxidative] cyclase 1 from Thermosynechococcus vestitus (strain NIES-2133 / IAM M-273 / BP-1).